A 309-amino-acid chain; its full sequence is Glutaminase (309 aa).

Substrate contacts are provided by Ser-64, Asn-114, Glu-160, Asn-167, Tyr-191, Tyr-243, and Val-261.

It belongs to the glutaminase family. Homotetramer.

The catalysed reaction is L-glutamine + H2O = L-glutamate + NH4(+). The sequence is that of Glutaminase from Azorhizobium caulinodans (strain ATCC 43989 / DSM 5975 / JCM 20966 / LMG 6465 / NBRC 14845 / NCIMB 13405 / ORS 571).